Here is a 223-residue protein sequence, read N- to C-terminus: DNA mismatch repair protein MutH (223 aa).

The protein belongs to the MutH family.

Its subcellular location is the cytoplasm. Its function is as follows. Sequence-specific endonuclease that cleaves unmethylated GATC sequences. It is involved in DNA mismatch repair. This Shewanella baltica (strain OS185) protein is DNA mismatch repair protein MutH.